Consider the following 437-residue polypeptide: D-aminoacyl-tRNA deacylase (437 aa).

It belongs to the DtdA deacylase family. Monomer. It depends on Zn(2+) as a cofactor.

It carries out the reaction a D-aminoacyl-tRNA + H2O = a tRNA + a D-alpha-amino acid + H(+). The enzyme catalyses glycyl-tRNA(Ala) + H2O = tRNA(Ala) + glycine + H(+). In terms of biological role, D-aminoacyl-tRNA deacylase with broad substrate specificity. By recycling D-aminoacyl-tRNA to D-amino acids and free tRNA molecules, this enzyme counteracts the toxicity associated with the formation of D-aminoacyl-tRNA entities in vivo. This is D-aminoacyl-tRNA deacylase from Methanoculleus marisnigri (strain ATCC 35101 / DSM 1498 / JR1).